Consider the following 315-residue polypeptide: Replication factor C small subunit (315 aa).

43-50 contacts ATP; the sequence is GSPGVGKT.

This sequence belongs to the activator 1 small subunits family. RfcS subfamily. In terms of assembly, heteromultimer composed of small subunits (RfcS) and large subunits (RfcL).

Part of the RFC clamp loader complex which loads the PCNA sliding clamp onto DNA. This Methanococcus maripaludis (strain C6 / ATCC BAA-1332) protein is Replication factor C small subunit.